Here is a 212-residue protein sequence, read N- to C-terminus: Major fimbrial subunit (212 aa).

Positions 1–18 (MKKTLLGSLILLAFATNA) are cleaved as a signal peptide. A disulfide bridge links Cys-42 with Cys-82.

It belongs to the fimbrial protein family.

It localises to the fimbrium. Its function is as follows. Mediates adherence to oropharyngeal epithelial cells. Helps the airway colonization process. The polypeptide is Major fimbrial subunit (hifA) (Haemophilus influenzae).